We begin with the raw amino-acid sequence, 93 residues long: Small ribosomal subunit protein uS19 (93 aa).

The protein belongs to the universal ribosomal protein uS19 family.

Protein S19 forms a complex with S13 that binds strongly to the 16S ribosomal RNA. This chain is Small ribosomal subunit protein uS19, found in Saccharopolyspora erythraea (strain ATCC 11635 / DSM 40517 / JCM 4748 / NBRC 13426 / NCIMB 8594 / NRRL 2338).